We begin with the raw amino-acid sequence, 358 residues long: UDP-N-acetylglucosamine--N-acetylmuramyl-(pentapeptide) pyrophosphoryl-undecaprenol N-acetylglucosamine transferase (358 aa).

UDP-N-acetyl-alpha-D-glucosamine-binding positions include 11-13, N120, R161, S188, and Q282; that span reads TGG.

The protein belongs to the glycosyltransferase 28 family. MurG subfamily.

It localises to the cell inner membrane. It catalyses the reaction di-trans,octa-cis-undecaprenyl diphospho-N-acetyl-alpha-D-muramoyl-L-alanyl-D-glutamyl-meso-2,6-diaminopimeloyl-D-alanyl-D-alanine + UDP-N-acetyl-alpha-D-glucosamine = di-trans,octa-cis-undecaprenyl diphospho-[N-acetyl-alpha-D-glucosaminyl-(1-&gt;4)]-N-acetyl-alpha-D-muramoyl-L-alanyl-D-glutamyl-meso-2,6-diaminopimeloyl-D-alanyl-D-alanine + UDP + H(+). The protein operates within cell wall biogenesis; peptidoglycan biosynthesis. Functionally, cell wall formation. Catalyzes the transfer of a GlcNAc subunit on undecaprenyl-pyrophosphoryl-MurNAc-pentapeptide (lipid intermediate I) to form undecaprenyl-pyrophosphoryl-MurNAc-(pentapeptide)GlcNAc (lipid intermediate II). The chain is UDP-N-acetylglucosamine--N-acetylmuramyl-(pentapeptide) pyrophosphoryl-undecaprenol N-acetylglucosamine transferase from Synechococcus sp. (strain CC9605).